Consider the following 152-residue polypeptide: MSLVIPDKFQHILRIMNTNIDGKRKVMFAMTAIKGVGRRYSNIVLKKADIDLDKRAGECTEEEVEKIVTIMSNPRQYKIPDWFLNRQKDIVDGKYSQLTSSNLDSKLREDLERLKKIRAHRGMRHYWGLRVRGQHTKTTGRRGRTVGVSKKK.

The disordered stretch occupies residues 133 to 152 (GQHTKTTGRRGRTVGVSKKK).

The protein belongs to the universal ribosomal protein uS13 family.

It localises to the cytoplasm. In terms of biological role, located at the top of the head of the 40S subunit, it contacts several helices of the 18S rRNA. The protein is Small ribosomal subunit protein uS13 (RpS18) of Spodoptera frugiperda (Fall armyworm).